Reading from the N-terminus, the 659-residue chain is MKKNRVFATAGLVLLAAGVLAACSSSKSSDSSAPKAYGYVYTADPETLDYLISSKNSTTVVTSNGIDGLFTNDNYGNLAPAVAEDWEVSKDGLTYTYKIRKGVKWFTSDGEEYAEVTAKDFVNGLKHAADKKSEAMYLAENSVKGLADYLSGTSTDFSTVGVKAVDDYTLQYTLNQPEPFWNSKLTYSIFWPLNEEFETSKGSDFAKPTDPTSLLYNGPFLLKGLTAKSSVEFVKNEQYWDKENVHLDTINLAYYDGSDQESLERNFTSGAYSYARLYPTSSNYSKVAEEYKDNIYYTQSGSGIAGLGVNIDRQSYNYTSKTTDSEKVATKKALLNKDFRQALNFALDRSAYSAQINGKDGAALAVRNLFVKPDFVSAGEKTFGDLVAAQLPAYGDEWKGVNLADGQDGLFNADKAKAEFAKAKKALEADGVQFPIHLDVPVDQASKNYISRIQSFKQSVETVLGVENVVVDIQQMTSDEFLNITYYAANASSEDWDVSGGVSWGPDYQDPSTYLDILKTTSSETTKTYLGFDNPNSPSVVQVGLKEYDKLVDEAARETSDLNVRYEKYAAAQAWLTDSSLFIPAMASSGAAPVLSRIVPFTGASAQTGSKGSDVYFKYLKSQDKVVTKEEYEKAREKWLKEKAESNEKAQKELASHVK.

The signal sequence occupies residues 1-22; sequence MKKNRVFATAGLVLLAAGVLAA. C23 carries the N-palmitoyl cysteine lipid modification. A lipid anchor (S-diacylglycerol cysteine) is attached at C23.

It belongs to the bacterial solute-binding protein 5 family.

It localises to the cell membrane. Functionally, part of the binding-protein-dependent transport system for oligopeptides; probably an oligopeptide binding protein. The protein is Oligopeptide-binding protein AmiA (amiA) of Streptococcus pneumoniae serotype 4 (strain ATCC BAA-334 / TIGR4).